Reading from the N-terminus, the 244-residue chain is NAD(P)H-quinone oxidoreductase subunit K (244 aa).

Residues cysteine 51, cysteine 52, cysteine 116, and cysteine 147 each coordinate [4Fe-4S] cluster.

Belongs to the complex I 20 kDa subunit family. As to quaternary structure, NDH-1 can be composed of about 15 different subunits; different subcomplexes with different compositions have been identified which probably have different functions. The cofactor is [4Fe-4S] cluster.

It localises to the cellular thylakoid membrane. The catalysed reaction is a plastoquinone + NADH + (n+1) H(+)(in) = a plastoquinol + NAD(+) + n H(+)(out). It carries out the reaction a plastoquinone + NADPH + (n+1) H(+)(in) = a plastoquinol + NADP(+) + n H(+)(out). Its function is as follows. NDH-1 shuttles electrons from an unknown electron donor, via FMN and iron-sulfur (Fe-S) centers, to quinones in the respiratory and/or the photosynthetic chain. The immediate electron acceptor for the enzyme in this species is believed to be plastoquinone. Couples the redox reaction to proton translocation, and thus conserves the redox energy in a proton gradient. Cyanobacterial NDH-1 also plays a role in inorganic carbon-concentration. This chain is NAD(P)H-quinone oxidoreductase subunit K, found in Synechococcus sp. (strain JA-2-3B'a(2-13)) (Cyanobacteria bacterium Yellowstone B-Prime).